Here is a 100-residue protein sequence, read N- to C-terminus: Nucleoid-associated protein jhp_0031 (100 aa).

This sequence belongs to the YbaB/EbfC family. As to quaternary structure, homodimer.

It localises to the cytoplasm. The protein localises to the nucleoid. Functionally, binds to DNA and alters its conformation. May be involved in regulation of gene expression, nucleoid organization and DNA protection. The chain is Nucleoid-associated protein jhp_0031 from Helicobacter pylori (strain J99 / ATCC 700824) (Campylobacter pylori J99).